A 165-amino-acid chain; its full sequence is Putative BTB/POZ domain-containing protein At2g40440 (165 aa).

In terms of domain architecture, BTB spans 24-98 (VDVRLKAGDS…IYSDGSMLSA (75 aa)).

It participates in protein modification; protein ubiquitination. Its function is as follows. May act as a substrate-specific adapter of an E3 ubiquitin-protein ligase complex (CUL3-RBX1-BTB) which mediates the ubiquitination and subsequent proteasomal degradation of target proteins. The polypeptide is Putative BTB/POZ domain-containing protein At2g40440 (Arabidopsis thaliana (Mouse-ear cress)).